Reading from the N-terminus, the 352-residue chain is tRNA pseudouridine synthase D (352 aa).

Residue Asp-81 is the Nucleophile of the active site. The 147-residue stretch at 157–303 (GVPNYFGAQR…MDHERRILRL (147 aa)) folds into the TRUD domain.

This sequence belongs to the pseudouridine synthase TruD family.

The catalysed reaction is uridine(13) in tRNA = pseudouridine(13) in tRNA. Functionally, responsible for synthesis of pseudouridine from uracil-13 in transfer RNAs. This is tRNA pseudouridine synthase D from Pseudomonas entomophila (strain L48).